Reading from the N-terminus, the 300-residue chain is D-alanine--D-alanine ligase (300 aa).

In terms of domain architecture, ATP-grasp spans 99-293 (KKILKYANIN…FAELLNSIVK (195 aa)). 126–181 (IEKIGYPVFVKPNSGGSSVATNLVKDGDGIKEAVELALKYDKEVMIENYTKGEEIT) is an ATP binding site. Residues Asp248, Glu260, and Asn262 each contribute to the Mg(2+) site.

It belongs to the D-alanine--D-alanine ligase family. Mg(2+) serves as cofactor. Requires Mn(2+) as cofactor.

The protein localises to the cytoplasm. It carries out the reaction 2 D-alanine + ATP = D-alanyl-D-alanine + ADP + phosphate + H(+). It participates in cell wall biogenesis; peptidoglycan biosynthesis. Its function is as follows. Cell wall formation. This Clostridium botulinum (strain 657 / Type Ba4) protein is D-alanine--D-alanine ligase.